A 305-amino-acid polypeptide reads, in one-letter code: LysM and putative peptidoglycan-binding domain-containing protein 3 (305 aa).

At 1–221 (MTGRNQHNGF…PYYGADWGMR (221 aa)) the chain is on the extracellular side. N-linked (GlcNAc...) asparagine glycosylation is present at Asn29. The disordered stretch occupies residues 31–60 (SETEYSEEDGEAFELRSRGRERHHRSTSRD). Residues 68–112 (LIREIKEGDTLISISLQYFCTVADIKRANNLLTEQDFFALRSLRI) enclose the LysM domain. Polar residues predominate over residues 121–144 (TETHNTAPHKSSSPSGTCRITETP). Positions 121 to 156 (TETHNTAPHKSSSPSGTCRITETPVSGASLDSTSSS) are disordered. Over residues 146–156 (SGASLDSTSSS) the composition is skewed to low complexity. A helical transmembrane segment spans residues 222–242 (WWTAVAIMLVVGIVTPVFYLL). Residues 243-305 (YYEVLMKADV…QHHVKHQEET (63 aa)) lie on the Cytoplasmic side of the membrane.

It is found in the cell membrane. The protein localises to the golgi apparatus. In terms of biological role, essential for Golgi structural integrity. This is LysM and putative peptidoglycan-binding domain-containing protein 3 (lysmd3) from Danio rerio (Zebrafish).